The primary structure comprises 401 residues: Argininosuccinate synthase (401 aa).

9 to 17 (AYSGGLDTS) is a binding site for ATP. Y86 lines the L-citrulline pocket. An ATP-binding site is contributed by G116. Residues T118, N122, and D123 each contribute to the L-aspartate site. N122 provides a ligand contact to L-citrulline. L-citrulline contacts are provided by R126, S174, S183, E259, and Y271.

This sequence belongs to the argininosuccinate synthase family. Type 1 subfamily. In terms of assembly, homotetramer.

It localises to the cytoplasm. It catalyses the reaction L-citrulline + L-aspartate + ATP = 2-(N(omega)-L-arginino)succinate + AMP + diphosphate + H(+). Its pathway is amino-acid biosynthesis; L-arginine biosynthesis; L-arginine from L-ornithine and carbamoyl phosphate: step 2/3. The sequence is that of Argininosuccinate synthase from Bacillus mycoides (strain KBAB4) (Bacillus weihenstephanensis).